We begin with the raw amino-acid sequence, 704 residues long: Polyribonucleotide nucleotidyltransferase (704 aa).

Mg(2+) is bound by residues aspartate 490 and aspartate 496. A KH domain is found at 557 to 616 (PKIEMIQIKPAKIKDVIGKGGETINSIIDETGVKIDIDQDGNVSIASSDAEMIKKAIKII). An S1 motif domain is found at 626 to 694 (GQVYLAKVVR…KQGRVNVSRK (69 aa)).

The protein belongs to the polyribonucleotide nucleotidyltransferase family. Mg(2+) is required as a cofactor.

The protein resides in the cytoplasm. The catalysed reaction is RNA(n+1) + phosphate = RNA(n) + a ribonucleoside 5'-diphosphate. Functionally, involved in mRNA degradation. Catalyzes the phosphorolysis of single-stranded polyribonucleotides processively in the 3'- to 5'-direction. The sequence is that of Polyribonucleotide nucleotidyltransferase from Enterococcus faecalis (strain ATCC 700802 / V583).